A 276-amino-acid chain; its full sequence is Acetyl-coenzyme A carboxylase carboxyl transferase subunit beta (276 aa).

The CoA carboxyltransferase N-terminal domain occupies 24-276; that stretch reads LWRECSNCHE…NNLLNLHSDK (253 aa). Positions 28, 31, 46, and 49 each coordinate Zn(2+). The C4-type zinc finger occupies 28-49; it reads CSNCHEKFYYRRAGVYEVCPNC.

The protein belongs to the AccD/PCCB family. Acetyl-CoA carboxylase is a heterohexamer composed of biotin carboxyl carrier protein (AccB), biotin carboxylase (AccC) and two subunits each of ACCase subunit alpha (AccA) and ACCase subunit beta (AccD). Requires Zn(2+) as cofactor.

Its subcellular location is the cytoplasm. It catalyses the reaction N(6)-carboxybiotinyl-L-lysyl-[protein] + acetyl-CoA = N(6)-biotinyl-L-lysyl-[protein] + malonyl-CoA. The protein operates within lipid metabolism; malonyl-CoA biosynthesis; malonyl-CoA from acetyl-CoA: step 1/1. Functionally, component of the acetyl coenzyme A carboxylase (ACC) complex. Biotin carboxylase (BC) catalyzes the carboxylation of biotin on its carrier protein (BCCP) and then the CO(2) group is transferred by the transcarboxylase to acetyl-CoA to form malonyl-CoA. The polypeptide is Acetyl-coenzyme A carboxylase carboxyl transferase subunit beta (Pediococcus pentosaceus (strain ATCC 25745 / CCUG 21536 / LMG 10740 / 183-1w)).